A 109-amino-acid polypeptide reads, in one-letter code: Small ribosomal subunit protein bS6c (109 aa).

This sequence belongs to the bacterial ribosomal protein bS6 family.

The protein localises to the plastid. It localises to the chloroplast. Binds together with bS18 to 16S ribosomal RNA. The chain is Small ribosomal subunit protein bS6c from Pyropia yezoensis (Susabi-nori).